The following is a 448-amino-acid chain: Protein Z-dependent protease inhibitor (448 aa).

The signal sequence occupies residues 1 to 21; sequence MRVASSLFLPVLLTEVWLVTS. The interval 33 to 70 is disordered; that stretch reads VHLESQDYENQTWEEYTRTDPREEEEEEEEKEEGKDEE. Residues 54 to 63 are compositionally biased toward acidic residues; sequence REEEEEEEEK. Asparagine 81 carries N-linked (GlcNAc...) asparagine glycosylation. A heparin-binding region spans residues 140-157; sequence AGPLILPALFKKVKETFS. Residues asparagine 184, asparagine 278, and asparagine 299 are each glycosylated (N-linked (GlcNAc...) asparagine).

The protein belongs to the serpin family. Post-translationally, phosphorylated by FAM20C in the extracellular medium. Detectable in liver, but not in heart, brain, spleen, lung, kidney, skeletal muscle or testes.

The protein resides in the secreted. Inhibits activity of the coagulation protease factor Xa in the presence of PROZ, calcium and phospholipids. Also inhibits factor XIa in the absence of cofactors. The polypeptide is Protein Z-dependent protease inhibitor (Serpina10) (Mus musculus (Mouse)).